The primary structure comprises 393 residues: NADH-quinone oxidoreductase subunit D (393 aa).

It belongs to the complex I 49 kDa subunit family. NDH-1 is composed of 14 different subunits. Subunits NuoB, C, D, E, F, and G constitute the peripheral sector of the complex.

It localises to the cell inner membrane. The catalysed reaction is a quinone + NADH + 5 H(+)(in) = a quinol + NAD(+) + 4 H(+)(out). In terms of biological role, NDH-1 shuttles electrons from NADH, via FMN and iron-sulfur (Fe-S) centers, to quinones in the respiratory chain. The immediate electron acceptor for the enzyme in this species is believed to be ubiquinone. Couples the redox reaction to proton translocation (for every two electrons transferred, four hydrogen ions are translocated across the cytoplasmic membrane), and thus conserves the redox energy in a proton gradient. The sequence is that of NADH-quinone oxidoreductase subunit D from Ehrlichia chaffeensis (strain ATCC CRL-10679 / Arkansas).